The following is a 362-amino-acid chain: 3-dehydroquinate synthase (362 aa).

Residues 71-76, 105-109, 129-130, Lys-142, Lys-151, and 169-172 contribute to the NAD(+) site; these read DGERYK, GVIGD, TT, and CLKT. Glu-184, His-247, and His-264 together coordinate Zn(2+).

It belongs to the sugar phosphate cyclases superfamily. Dehydroquinate synthase family. The cofactor is Co(2+). It depends on Zn(2+) as a cofactor. NAD(+) is required as a cofactor.

It is found in the cytoplasm. It carries out the reaction 7-phospho-2-dehydro-3-deoxy-D-arabino-heptonate = 3-dehydroquinate + phosphate. The protein operates within metabolic intermediate biosynthesis; chorismate biosynthesis; chorismate from D-erythrose 4-phosphate and phosphoenolpyruvate: step 2/7. In terms of biological role, catalyzes the conversion of 3-deoxy-D-arabino-heptulosonate 7-phosphate (DAHP) to dehydroquinate (DHQ). The protein is 3-dehydroquinate synthase of Salmonella arizonae (strain ATCC BAA-731 / CDC346-86 / RSK2980).